The chain runs to 151 residues: UPF0208 membrane protein YfbV (151 aa).

2 consecutive transmembrane segments (helical) span residues 46–65 (YAIR…QIAL) and 69–91 (LGPA…WWLG).

It belongs to the UPF0208 family.

The protein resides in the cell inner membrane. The sequence is that of UPF0208 membrane protein YfbV from Salmonella choleraesuis (strain SC-B67).